The following is a 276-amino-acid chain: A-factor receptor protein (276 aa).

Residues 8–68 (VQTWRSIVDA…AIMDEQTSTV (61 aa)) enclose the HTH tetR-type domain. Residues 31–50 (AISEILRRAKVTKGALYFHF) constitute a DNA-binding region (H-T-H motif). The segment covering 207 to 220 (EKAEREEQEARIAA) has biased composition (basic and acidic residues). Residues 207–276 (EKAEREEQEA…AGVAAGGVVA (70 aa)) are disordered. Low complexity predominate over residues 221–235 (EAKGAGSDAATDSGS). Gly residues predominate over residues 236–257 (RSGGSGLRGGGSGRGPRAGGAG).

Homodimer or multimer. Binds to both DNA and A-factor as a homodimer.

The protein resides in the cytoplasm. Its function is as follows. Represses adpA expression by binding to the promoter region in the absence of A-factor, causing repression of streptomycin production and of sporulation. In Streptomyces griseus, this protein is A-factor receptor protein (arpA).